Here is a 331-residue protein sequence, read N- to C-terminus: MRCWSPCSLLVVIAIYCLSSHTSEAFDLAQACVESQRLSLLPICDTIFAVQQEGAQQSADDGLRSKRFIRFGRALSGDAFLRFGKNVPDLPFEDKRFLRFGRAAPQLDDLLKQALQRVESLQKSDDTSVRRKRSTDAAPQSNTDSAEQKNDSAKITKRYVDDVEDSDVKRFMRFGKRFMRFGRNPSDVGSKLTEKRFMRFGRDPEKRFMRFGKSDDKKFMRFGRNPGDAEDELEEDKRFMRFGRGDEEDEEEAEKRFMRFGRDPEKKFMRFGKNGEEKRFMRFGRNPEEPEADKRFMRFGRGGEEDDVNTEEKRFMRFGRSAEKCKGCLEG.

The signal sequence occupies residues 1 to 25 (MRCWSPCSLLVVIAIYCLSSHTSEA). Residues 26-65 (FDLAQACVESQRLSLLPICDTIFAVQQEGAQQSADDGLRS) constitute a propeptide that is removed on maturation. Phe-71 and Phe-83 each carry phenylalanine amide. The propeptide occupies 86 to 94 (NVPDLPFED). Phe-100 bears the Phenylalanine amide mark. The propeptide occupies 103-168 (AAPQLDDLLK…YVDDVEDSDV (66 aa)). The disordered stretch occupies residues 122-153 (QKSDDTSVRRKRSTDAAPQSNTDSAEQKNDSA). A phenylalanine amide mark is found at Phe-174 and Phe-181. Residues 184–194 (NPSDVGSKLTE) constitute a propeptide that is removed on maturation. At Phe-200 the chain carries Phenylalanine amide. A propeptide spanning residues 203–205 (DPE) is cleaved from the precursor. Phe-211 is subject to Phenylalanine amide. Residues 214–216 (SDD) constitute a propeptide that is removed on maturation. Position 222 is a phenylalanine amide (Phe-222). A propeptide spanning residues 225-236 (NPGDAEDELEED) is cleaved from the precursor. Phe-242 carries the phenylalanine amide modification. The propeptide occupies 245 to 254 (GDEEDEEEAE). Phe-260 is subject to Phenylalanine amide. A propeptide spanning residues 263–265 (DPE) is cleaved from the precursor. Phenylalanine amide is present on Phe-271. The propeptide occupies 274–277 (NGEE). Phe-283 is modified (phenylalanine amide). A propeptide spanning residues 286 to 293 (NPEEPEAD) is cleaved from the precursor. Phe-299 is subject to Phenylalanine amide. A propeptide spanning residues 302 to 312 (GGEEDDVNTEE) is cleaved from the precursor. Phe-318 is subject to Phenylalanine amide. Positions 321–331 (SAEKCKGCLEG) are excised as a propeptide.

This sequence belongs to the FARP (FMRFamide related peptide) family. As to expression, present ubiquitously in the brain and regions of the central nervous system as well as in the periphery and throughout the dermal chromatophore layer (at protein level).

The protein localises to the secreted. Excitatory neurotransmitters that directly modulate chromatophore function by activating chromatophore expansion at the chromatophore neuromuscular junction. The protein is FMRFamide-related neuropeptides of Sepia officinalis (Common cuttlefish).